Reading from the N-terminus, the 305-residue chain is Translation initiation factor eIF2B subunit alpha (305 aa).

N6-acetyllysine is present on Lys35.

It belongs to the eIF-2B alpha/beta/delta subunits family. In terms of assembly, component of the translation initiation factor 2B (eIF2B) complex which is a heterodecamer of two sets of five different subunits: alpha, beta, gamma, delta and epsilon. Subunits alpha, beta and delta comprise a regulatory subcomplex and subunits epsilon and gamma comprise a catalytic subcomplex. Within the complex, the hexameric regulatory complex resides at the center, with the two heterodimeric catalytic subcomplexes bound on opposite sides.

It is found in the cytoplasm. Its subcellular location is the cytosol. Activated by the chemical integrated stress response (ISR) inhibitor ISRIB which stimulates guanine nucleotide exchange factor activity for both phosphorylated and unphosphorylated eIF2. In terms of biological role, acts as a component of the translation initiation factor 2B (eIF2B) complex, which catalyzes the exchange of GDP for GTP on eukaryotic initiation factor 2 (eIF2) gamma subunit. Its guanine nucleotide exchange factor activity is repressed when bound to eIF2 complex phosphorylated on the alpha subunit, thereby limiting the amount of methionyl-initiator methionine tRNA available to the ribosome and consequently global translation is repressed. The protein is Translation initiation factor eIF2B subunit alpha (Eif2b1) of Mus musculus (Mouse).